A 39-amino-acid polypeptide reads, in one-letter code: Photosystem II reaction center protein J (39 aa).

A helical membrane pass occupies residues 9 to 29 (LWLVGLVGGLAVITMLGLFIY).

This sequence belongs to the PsbJ family. PSII is composed of 1 copy each of membrane proteins PsbA, PsbB, PsbC, PsbD, PsbE, PsbF, PsbH, PsbI, PsbJ, PsbK, PsbL, PsbM, PsbT, PsbX, PsbY, PsbZ, Psb30/Ycf12, at least 3 peripheral proteins of the oxygen-evolving complex and a large number of cofactors. It forms dimeric complexes.

It localises to the plastid. The protein resides in the chloroplast thylakoid membrane. One of the components of the core complex of photosystem II (PSII). PSII is a light-driven water:plastoquinone oxidoreductase that uses light energy to abstract electrons from H(2)O, generating O(2) and a proton gradient subsequently used for ATP formation. It consists of a core antenna complex that captures photons, and an electron transfer chain that converts photonic excitation into a charge separation. The chain is Photosystem II reaction center protein J from Phaeodactylum tricornutum (strain CCAP 1055/1).